The chain runs to 2233 residues: MSEESLFESSPQKMEYEITNYSERHTELPGHFIGLNTVDKLEESPLRDFVKSHGGHTVISKILIANNGIAAVKEIRSVRKWAYETFGDDRTVQFVAMATPEDLEANAEYIRMADQYIEVPGGTNNNNYANVDLIVDIAERADVDAVWAGWGHASENPLLPEKLSQSKRKVIFIGPPGNAMRSLGDKISSTIVAQSAKVPCIPWSGTGVDTVHVDEKTGLVSVDDDIYQKGCCTSPEDGLQKAKRIGFPVMIKASEGGGGKGIRQVEREEDFIALYHQAANEIPGSPIFIMKLAGRARHLEVQLLADQYGTNISLFGRDCSVQRRHQKIIEEAPVTIAKAETFHEMEKAAVRLGKLVGYVSAGTVEYLYSHDDGKFYFLELNPRLQVEHPTTEMVSGVNLPAAQLQIAMGIPMHRISDIRTLYGMNPHSASEIDFEFKTQDATKKQRRPIPKGHCTACRITSEDPNDGFKPSGGTLHELNFRSSSNVWGYFSVGNNGNIHSFSDSQFGHIFAFGENRQASRKHMVVALKELSIRGDFRTTVEYLIKLLETEDFEDNTITTGWLDDLITHKMTAEKPDPTLAVICGAATKAFLASEEARHKYIESLQKGQVLSKDLLQTMFPVDFIHEGKRYKFTVAKSGNDRYTLFINGSKCDIILRQLSDGGLLIAIGGKSHTIYWKEEVAATRLSVDSMTTLLEVENDPTQLRTPSPGKLVKFLVENGEHIIKGQPYAEIEVMKMQMPLVSQENGIVQLLKQPGSTIVAGDIMAIMTLDDPSKVKHALPFEGMLPDFGSPVIEGTKPAYKFKSLVSTLENILKGYDNQVIMNASLQQLIEVLRNPKLPYSEWKLHISALHSRLPAKLDEQMEELVARSLRRGAVFPARQLSKLIDMAVKNPEYNPDKLLGAVVEPLADIAHKYSNGLEAHEHSIFVHFLEEYYEVEKLFNGPNVREENIILKLRDENPKDLDKVALTVLSHSKVSAKNNLILAILKHYQPLCKLSSKVSAIFSTPLQHIVELESKATAKVALQAREILIQGALPSVKERTEQIEHILKSSVVKVAYGSSNPKRSEPDLNILKDLIDSNYVVFDVLLQFLTHQDPVVTAAAAQVYIRRAYRAYTIGDIRVHEGVTVPIVEWKFQLPSAAFSTFPTVKSKMGMNRAVSVSDLSYVANSQSSPLREGILMAVDHLDDVDEILSQSLEVIPRHQSSSNGPAPDRSGSSASLSNVANVCVASTEGFESEEEILVRLREILDLNKQELINASIRRITFMFGFKDGSYPKYYTFNGPNYNENETIRHIEPALAFQLELGRLSNFNIKPIFTDNRNIHVYEAVSKTSPLDKRFFTRGIIRTGHIRDDISIQEYLTSEANRLMSDILDNLEVTDTSNSDLNHIFINFIAVFDISPEDVEAAFGGFLERFGKRLLRLRVSSAEIRIIIKDPQTGAPVPLRALINNVSGYVIKTEMYTEVKNAKGEWVFKSLGKPGSMHLRPIATPYPVKEWLQPKRYKAHLMGTTYVYDFPELFRQASSSQWKNFSADVKLTDDFFISNELIEDENGELTEVEREPGANAIGMVAFKITVKTPEYPRGRQFVVVANDITFKIGSFGPQEDEFFNKVTEYARKRGIPRIYLAANSGARIGMAEEIVPLFQVAWNDAANPDKGFQYLYLTSEGMETLKKFDKENSVLTERTVINGEERFVIKTIIGSEDGLGVECLRGSGLIAGATSRAYHDIFTITLVTCRSVGIGAYLVRLGQRAIQVEGQPIILTGAPAINKMLGREVYTSNLQLGGTQIMYNNGVSHLTAVDDLAGVEKIVEWMSYVPAKRNMPVPILETKDTWDRPVDFTPTNDETYDVRWMIEGRETESGFEYGLFDKGSFFETLSGWAKGVVVGRARLGGIPLGVIGVETRTVENLIPADPANPNSAETLIQEPGQVWHPNSAFKTAQAINDFNNGEQLPMMILANWRGFSGGQRDMFNEVLKYGSFIVDALVDYKQPIIIYIPPTGELRGGSWVVVDPTINADQMEMYADVNARAGVLEPQGMVGIKFRREKLLDTMNRLDDKYRELRSQLSNKSLAPEVHQQISKQLADRERELLPIYGQISLQFADLHDRSSRMVAKGVISKELEWTEARRFFFWRLRRRLNEEYLIKRLSHQVGEASRLEKIARIRSWYPASVDHEDDRQVATWIEENYKTLDDKLKGLKLESFAQDLAKKIRSDHDNAIDGLSEVIKMLSTDDKEKLLKTLK.

Position 2 is an N-acetylserine (serine 2). Residue serine 2 is modified to Phosphoserine. One can recognise a Biotin carboxylation domain in the interval 58–567; the sequence is VISKILIANN…TTGWLDDLIT (510 aa). Residues 216-408 enclose the ATP-grasp domain; the sequence is KTGLVSVDDD…LPAAQLQIAM (193 aa). Position 256–261 (256–261) interacts with ATP; that stretch reads GGGGKG. Residues glutamate 365, glutamate 379, and asparagine 381 each contribute to the Mn(2+) site. Residue arginine 383 is part of the active site. The Biotinyl-binding domain maps to 694-768; that stretch reads LEVENDPTQL…VAGDIMAIMT (75 aa). Lysine 735 carries the post-translational modification N6-biotinyllysine. 4 positions are modified to phosphoserine: serine 790, serine 1148, serine 1157, and serine 1162. Residues 1486–1822 form the CoA carboxyltransferase N-terminal domain; the sequence is PYPVKEWLQP…KRNMPVPILE (337 aa). The tract at residues 1486–2141 is carboxyltransferase; that stretch reads PYPVKEWLQP…EEYLIKRLSH (656 aa). Residue 1627–1629 participates in acetyl-CoA binding; it reads ARI. Residue arginine 1731 participates in CoA binding. Positions 1826–2141 constitute a CoA carboxyltransferase C-terminal domain; that stretch reads TWDRPVDFTP…EEYLIKRLSH (316 aa). Glycine 1998 serves as a coordination point for acetyl-CoA. Residues lysine 2034 and arginine 2036 each coordinate CoA.

In terms of assembly, homodimer. Biotin serves as cofactor. Mn(2+) is required as a cofactor.

It localises to the cytoplasm. The protein localises to the endoplasmic reticulum membrane. The catalysed reaction is hydrogencarbonate + acetyl-CoA + ATP = malonyl-CoA + ADP + phosphate + H(+). It carries out the reaction N(6)-biotinyl-L-lysyl-[protein] + hydrogencarbonate + ATP = N(6)-carboxybiotinyl-L-lysyl-[protein] + ADP + phosphate + H(+). Its pathway is lipid metabolism; malonyl-CoA biosynthesis; malonyl-CoA from acetyl-CoA: step 1/1. With respect to regulation, by phosphorylation. The catalytic activity is inhibited by soraphen A, a polyketide isolated from the myxobacterium Sorangium cellulosum and a potent inhibitor of fungal growth. Its function is as follows. Carries out three functions: biotin carboxyl carrier protein, biotin carboxylase and carboxyltransferase. Involved in the synthesis of very-long-chain fatty acid synthesis which is required to maintain a functional nuclear envelope. Required for acylation and vacuolar membrane association of VAC8 which is necessary to maintain a normal morphology of the vacuole. This chain is Acetyl-CoA carboxylase (ACC1), found in Saccharomyces cerevisiae (strain ATCC 204508 / S288c) (Baker's yeast).